The following is a 119-amino-acid chain: Phosphoribosyl-AMP cyclohydrolase (119 aa).

Aspartate 77 contacts Mg(2+). Cysteine 78 is a Zn(2+) binding site. Mg(2+) contacts are provided by aspartate 79 and aspartate 81. Cysteine 94 and cysteine 101 together coordinate Zn(2+).

This sequence belongs to the PRA-CH family. As to quaternary structure, homodimer. It depends on Mg(2+) as a cofactor. Zn(2+) is required as a cofactor.

It localises to the cytoplasm. The catalysed reaction is 1-(5-phospho-beta-D-ribosyl)-5'-AMP + H2O = 1-(5-phospho-beta-D-ribosyl)-5-[(5-phospho-beta-D-ribosylamino)methylideneamino]imidazole-4-carboxamide. The protein operates within amino-acid biosynthesis; L-histidine biosynthesis; L-histidine from 5-phospho-alpha-D-ribose 1-diphosphate: step 3/9. Its function is as follows. Catalyzes the hydrolysis of the adenine ring of phosphoribosyl-AMP. The chain is Phosphoribosyl-AMP cyclohydrolase from Cereibacter sphaeroides (strain KD131 / KCTC 12085) (Rhodobacter sphaeroides).